Consider the following 555-residue polypeptide: Embryonic protein DC-8 (555 aa).

The span at 83 to 115 shows a compositional bias: basic and acidic residues; that stretch reads RENTDYAYDKGREGGDVAAQKAEEAKEKAKMAK. Disordered stretches follow at residues 83 to 118 and 132 to 151; these read RENT…KDTT and KAEE…KEKA. Repeat copies occupy residues 97 to 114, 115 to 125, 126 to 140, 141 to 154, 155 to 176, 177 to 191, 192 to 205, 206 to 216, 217 to 237, 238 to 259, 260 to 281, 282 to 303, 304 to 325, 326 to 343, 344 to 358, 359 to 376, and 377 to 391. Residues 97-391 form a 17 X approximate tandem repeats region; sequence GDVAAQKAEE…DTTVGKMTEL (295 aa). The tract at residues 184-204 is disordered; sequence AAEAKDTTAQKAAEAKEKTGE. Positions 444–465 are enriched in basic and acidic residues; it reads LQEEGVKDEAKQRAEADRETAG. A disordered region spans residues 444-472; the sequence is LQEEGVKDEAKQRAEADRETAGDRGSAAK.

It belongs to the LEA type 4 family.

The protein resides in the cytoplasm. Its subcellular location is the secreted. It localises to the cell wall. In terms of biological role, may play a role in late embryogeny. This Daucus carota (Wild carrot) protein is Embryonic protein DC-8.